A 602-amino-acid chain; its full sequence is GTP-binding protein 2 (602 aa).

A disordered region spans residues 18–64; sequence GPAMGGNLKARGAGGSSSCGGPKGKKKNGRNRGGKANNPPYLPPEAE. A compositionally biased stretch (gly residues) spans 29 to 39; that stretch reads GAGGSSSCGGP. Positions 40–50 are enriched in basic residues; it reads KGKKKNGRNRG. Residues 170 to 398 form the tr-type G domain; that stretch reads FLDLRVAVLG…LNILPPLTNS (229 aa). GTP-binding positions include 179–186, 260–264, and 316–319; these read GNVDSGKS, DLAGH, and SKVD.

The protein belongs to the TRAFAC class translation factor GTPase superfamily. Classic translation factor GTPase family. GTPBP1 subfamily. Predominantly expressed in thymus, spleen, and testis. Expressed at lower levels in brain, heart, lung, kidney, and skeletal muscle. In testis, specifically expressed in spermatocytes and round spermatids.

This is GTP-binding protein 2 from Mus musculus (Mouse).